A 1365-amino-acid chain; its full sequence is MRLLALVLLLLCAPLRAWTYSLRYGIPESAQVWSILVHLLGDVDNQLLTNLYPLVTGLDDEIDIQENLVALTSNVLRERYDKEDVADLLELYASLYPMGMIQHDISSNAEQDDANSSYFVLNGNRYEKPDDVFYLKSKDLTIQQKVPDVDVIQPYDVVIGTNSEAPILILYGCPTVIDSDFEEFNRNLFMEAMNGEGKFRFIWRSTCSLDGKSVEYPLTHPLEITLQNGSRMSSIPQLKKILYTVPKEILVGADNDDQLHDLEPEELRELDLRVTSLISEFYQYKKDITATLNFTKSIVNNFPLISKQLIKVSSVNKDIITSNEELNSKGFDYNMLGLYINGQNWKITSLTPYNLLTALKTEYQSLLKITNLLQELEPSKCILDSKFLLNKFSQFSLGKLQNLQPIKMDLHTIPGFSESVIYFNDIESDPQYDELVNSVQAFFDKSKFGELPEIKQNWSEIIFVIDFARLEDSEVKEALGGLVRAVNVVSQGYPQRVGLLPFSSDSDKSVVNKIYELKNSTDNLTELKSFLETMLLADGLSANAKHSKHIPVPDVFHLLDELQIDETSIIINGEIYPFRKNAWNYLIAKVIKKDTEFIRKELSNSSPKNKQISVRDLLHYKSANLRHNKYTPNYFADSVYSSVNNTALESVCSERIGYYTKNEEYNLLHTITLVDDFGSIHALKRLRNLLHTSFVGVRIRIIHVGDISDIWYQLRGSLSQKDPIGSINTFIDALKLKKVKSHTYKKSGLNQLGLHKWLPDIPLFELQKGSFIALNGRFIHLDQNEVPETEHFEAIIKREALRTIDSVFALDLLFPGFSQEIINPDLIEMISSILTRLFYQGTHIYNNGIDYTTESSLPRMDLSEFFRPNNLTMFEDGKSASIDLLLILDPLEERTQMILSLVEQFRPLKFVNIQVILMPTLELNIVPIRRIYVDDADIVKSITSEDSRSDPEVDIEMDVPNSFIVDNNYRIKKLLIELHSFSSKTVLSTGNIDGMGGVCLALVDSAGNIIDKTTTMKTFGYGQFHTDKFLKGCYIKSCDSRYTVQSFSTDGHPDFIPSDSLDILSYNPQKIAVKISEEPTHEEEYEEGRNNDTIINIFTILESGPDEEERYMQMILSILSKCPETQKVNFFILDQPFISDTLRKSCEYINSSDEMRGNVIFLNYEWPQWLRPQRFSSRRRDVSRFLFLDVLLPQNISKVLYMSPTEVPLDPFDIFQFQGLKRAPLGLFRMSGDGYWKEGYWEKMLRENNLEFYSTEPAFLVNLERFRELDAGDKYRIHYQRISTDAMSLVNIGQDLVNNLQLEVPIRFLKGSYKKKLVINDECVSEWKKKINKFASSPGDEDVPGESVSSKYQDSDNAAPLHDEL.

Positions 1–17 (MRLLALVLLLLCAPLRA) are cleaved as a signal peptide. N-linked (GlcNAc...) asparagine glycosylation is found at N115, N228, N293, N457, N519, N523, N644, N870, N1091, N1150, and N1195. Residues 1334 to 1365 (FASSPGDEDVPGESVSSKYQDSDNAAPLHDEL) form a disordered region. Positions 1347-1356 (SVSSKYQDSD) are enriched in polar residues. The Prevents secretion from ER signature appears at 1362–1365 (HDEL).

It to D.melanogaster UGGG.

It localises to the endoplasmic reticulum lumen. In terms of biological role, required for (1-&gt;6)-beta-D-glucan synthesis and normal cell growth. The sequence is that of Killer toxin-resistance protein 5 (KRE5) from Saccharomyces cerevisiae (strain ATCC 204508 / S288c) (Baker's yeast).